The primary structure comprises 411 residues: Serine hydroxymethyltransferase (411 aa).

120 to 122 (GHL) is a (6S)-5,6,7,8-tetrahydrofolate binding site. N6-(pyridoxal phosphate)lysine is present on Lys-225. Position 350 to 352 (350 to 352 (SPF)) interacts with (6S)-5,6,7,8-tetrahydrofolate.

This sequence belongs to the SHMT family. As to quaternary structure, homodimer. Requires pyridoxal 5'-phosphate as cofactor.

Its subcellular location is the cytoplasm. The catalysed reaction is (6R)-5,10-methylene-5,6,7,8-tetrahydrofolate + glycine + H2O = (6S)-5,6,7,8-tetrahydrofolate + L-serine. It functions in the pathway one-carbon metabolism; tetrahydrofolate interconversion. The protein operates within amino-acid biosynthesis; glycine biosynthesis; glycine from L-serine: step 1/1. Functionally, catalyzes the reversible interconversion of serine and glycine with tetrahydrofolate (THF) serving as the one-carbon carrier. This reaction serves as the major source of one-carbon groups required for the biosynthesis of purines, thymidylate, methionine, and other important biomolecules. Also exhibits THF-independent aldolase activity toward beta-hydroxyamino acids, producing glycine and aldehydes, via a retro-aldol mechanism. This chain is Serine hydroxymethyltransferase, found in Lactobacillus acidophilus (strain ATCC 700396 / NCK56 / N2 / NCFM).